We begin with the raw amino-acid sequence, 118 residues long: Small ribosomal subunit protein uS13 (118 aa).

A disordered region spans residues 93-118; sequence RGLPVRGQRTKTNARTRKGPRKPIRK.

Belongs to the universal ribosomal protein uS13 family. As to quaternary structure, part of the 30S ribosomal subunit. Forms a loose heterodimer with protein S19. Forms two bridges to the 50S subunit in the 70S ribosome.

Functionally, located at the top of the head of the 30S subunit, it contacts several helices of the 16S rRNA. In the 70S ribosome it contacts the 23S rRNA (bridge B1a) and protein L5 of the 50S subunit (bridge B1b), connecting the 2 subunits; these bridges are implicated in subunit movement. Contacts the tRNAs in the A and P-sites. This chain is Small ribosomal subunit protein uS13, found in Azotobacter vinelandii (strain DJ / ATCC BAA-1303).